Reading from the N-terminus, the 505-residue chain is ATP synthase subunit alpha, chloroplastic (505 aa).

170 to 177 serves as a coordination point for ATP; the sequence is GDRQTGKT.

The protein belongs to the ATPase alpha/beta chains family. F-type ATPases have 2 components, CF(1) - the catalytic core - and CF(0) - the membrane proton channel. CF(1) has five subunits: alpha(3), beta(3), gamma(1), delta(1), epsilon(1). CF(0) has four main subunits: a, b, b' and c.

Its subcellular location is the plastid. It localises to the chloroplast thylakoid membrane. The enzyme catalyses ATP + H2O + 4 H(+)(in) = ADP + phosphate + 5 H(+)(out). Functionally, produces ATP from ADP in the presence of a proton gradient across the membrane. The alpha chain is a regulatory subunit. This Carica papaya (Papaya) protein is ATP synthase subunit alpha, chloroplastic.